The primary structure comprises 289 residues: ATP synthase gamma chain (289 aa).

It belongs to the ATPase gamma chain family. In terms of assembly, F-type ATPases have 2 components, CF(1) - the catalytic core - and CF(0) - the membrane proton channel. CF(1) has five subunits: alpha(3), beta(3), gamma(1), delta(1), epsilon(1). CF(0) has three main subunits: a, b and c.

The protein localises to the cell inner membrane. Functionally, produces ATP from ADP in the presence of a proton gradient across the membrane. The gamma chain is believed to be important in regulating ATPase activity and the flow of protons through the CF(0) complex. The sequence is that of ATP synthase gamma chain from Coxiella burnetii (strain CbuK_Q154) (Coxiella burnetii (strain Q154)).